The sequence spans 239 residues: Ribonuclease PH (239 aa).

Residues Arg86 and 124–126 (GTR) each bind phosphate.

The protein belongs to the RNase PH family. In terms of assembly, homohexameric ring arranged as a trimer of dimers.

The catalysed reaction is tRNA(n+1) + phosphate = tRNA(n) + a ribonucleoside 5'-diphosphate. In terms of biological role, phosphorolytic 3'-5' exoribonuclease that plays an important role in tRNA 3'-end maturation. Removes nucleotide residues following the 3'-CCA terminus of tRNAs; can also add nucleotides to the ends of RNA molecules by using nucleoside diphosphates as substrates, but this may not be physiologically important. Probably plays a role in initiation of 16S rRNA degradation (leading to ribosome degradation) during starvation. This chain is Ribonuclease PH, found in Sodalis glossinidius (strain morsitans).